A 259-amino-acid chain; its full sequence is uncharacterized protein (259 aa).

Residues 82-128 (NSGMAETIEEKREDFQKEEKEDFTEEQNIEDLLAAVADAEGRYQTNQ) adopt a coiled-coil conformation. Positions 192-259 (LIQTQNQHPR…SSSRNSSTTS (68 aa)) are disordered. A compositionally biased stretch (basic residues) spans 228 to 240 (KKVHARSRKRRKT). Residues 241 to 259 (SSSSSSSSSSSSRNSSTTS) are compositionally biased toward low complexity.

This is an uncharacterized protein from Homo sapiens (Human).